A 294-amino-acid chain; its full sequence is tRNA dimethylallyltransferase (294 aa).

ATP is bound at residue 10–17 (GPTAVGKT). 12 to 17 (TAVGKT) is a binding site for substrate. An interaction with substrate tRNA region spans residues 35–38 (DSQQ).

This sequence belongs to the IPP transferase family. Monomer. Mg(2+) serves as cofactor.

The catalysed reaction is adenosine(37) in tRNA + dimethylallyl diphosphate = N(6)-dimethylallyladenosine(37) in tRNA + diphosphate. In terms of biological role, catalyzes the transfer of a dimethylallyl group onto the adenine at position 37 in tRNAs that read codons beginning with uridine, leading to the formation of N6-(dimethylallyl)adenosine (i(6)A). The chain is tRNA dimethylallyltransferase from Streptococcus suis (strain 05ZYH33).